A 191-amino-acid chain; its full sequence is Ribosomal RNA small subunit methyltransferase G (191 aa).

S-adenosyl-L-methionine contacts are provided by residues G62, F67, 111–112 (IE), and R124.

This sequence belongs to the methyltransferase superfamily. RNA methyltransferase RsmG family.

It localises to the cytoplasm. The catalysed reaction is guanosine(527) in 16S rRNA + S-adenosyl-L-methionine = N(7)-methylguanosine(527) in 16S rRNA + S-adenosyl-L-homocysteine. In terms of biological role, specifically methylates the N7 position of guanine in position 527 of 16S rRNA. In Rickettsia akari (strain Hartford), this protein is Ribosomal RNA small subunit methyltransferase G.